The following is a 475-amino-acid chain: Maintenance of mitochondrial morphology protein 1 (475 aa).

Residues 1–14 (MSETFSPNLTFTEG) are Lumenal-facing. A helical transmembrane segment spans residues 15 to 35 (FVLGQASFLIILLLFIRYVVF). Over 36-475 (SPSEQIDHEG…VTPGQVGTSR (440 aa)) the chain is Cytoplasmic. The 199-residue stretch at 80 to 278 (PAESSDWVNV…HPNHISLALP (199 aa)) folds into the SMP-LTD domain. Disordered regions lie at residues 321–381 (NPVE…GQPQ) and 394–475 (SYPH…GTSR). Residues 341–351 (PPTPLVQPPGT) are compositionally biased toward pro residues. Composition is skewed to polar residues over residues 353–380 (PTLS…QGQP) and 394–403 (SYPHYNTYTL). The span at 442-464 (STTSSLTPSQSQSQFRFRGQFAS) shows a compositional bias: low complexity.

This sequence belongs to the MMM1 family. In terms of assembly, homodimer. Component of the ER-mitochondria encounter structure (ERMES) or MDM complex, composed of MMM1, MDM10, MDM12 and MDM34. An MMM1 homodimer associates with one molecule of MDM12 on each side in a pairwise head-to-tail manner, and the SMP-LTD domains of MMM1 and MDM12 generate a continuous hydrophobic tunnel for phospholipid trafficking.

It localises to the endoplasmic reticulum membrane. Functionally, component of the ERMES/MDM complex, which serves as a molecular tether to connect the endoplasmic reticulum (ER) and mitochondria. Components of this complex are involved in the control of mitochondrial shape and protein biogenesis, and function in nonvesicular lipid trafficking between the ER and mitochondria. The MDM12-MMM1 subcomplex functions in the major beta-barrel assembly pathway that is responsible for biogenesis of all outer membrane beta-barrel proteins, and acts in a late step after the SAM complex. The MDM10-MDM12-MMM1 subcomplex further acts in the TOM40-specific pathway after the action of the MDM12-MMM1 complex. Essential for establishing and maintaining the structure of mitochondria and maintenance of mtDNA nucleoids. This is Maintenance of mitochondrial morphology protein 1 from Cryptococcus neoformans var. neoformans serotype D (strain B-3501A) (Filobasidiella neoformans).